The following is a 252-amino-acid chain: Imidazole glycerol phosphate synthase subunit HisF (252 aa).

Active-site residues include D11 and D130.

Belongs to the HisA/HisF family. As to quaternary structure, heterodimer of HisH and HisF.

The protein localises to the cytoplasm. The enzyme catalyses 5-[(5-phospho-1-deoxy-D-ribulos-1-ylimino)methylamino]-1-(5-phospho-beta-D-ribosyl)imidazole-4-carboxamide + L-glutamine = D-erythro-1-(imidazol-4-yl)glycerol 3-phosphate + 5-amino-1-(5-phospho-beta-D-ribosyl)imidazole-4-carboxamide + L-glutamate + H(+). It participates in amino-acid biosynthesis; L-histidine biosynthesis; L-histidine from 5-phospho-alpha-D-ribose 1-diphosphate: step 5/9. Its function is as follows. IGPS catalyzes the conversion of PRFAR and glutamine to IGP, AICAR and glutamate. The HisF subunit catalyzes the cyclization activity that produces IGP and AICAR from PRFAR using the ammonia provided by the HisH subunit. The chain is Imidazole glycerol phosphate synthase subunit HisF from Dictyoglomus turgidum (strain DSM 6724 / Z-1310).